Here is a 121-residue protein sequence, read N- to C-terminus: Spermidine export protein MdtJ (121 aa).

The next 4 membrane-spanning stretches (helical) occupy residues 1–21 (MYIYWILLGLAIATEITGTLS), 32–52 (GGFILMLVMISLSYIFLSFAV), 55–75 (IALGVAYALWEGIGILFITLF), and 82–102 (ESLSLMKIAGLTTLVAGIVLI).

Belongs to the drug/metabolite transporter (DMT) superfamily. Small multidrug resistance (SMR) (TC 2.A.7.1) family. MdtJ subfamily. As to quaternary structure, forms a complex with MdtI.

Its subcellular location is the cell inner membrane. Functionally, catalyzes the excretion of spermidine. The polypeptide is Spermidine export protein MdtJ (Escherichia coli O139:H28 (strain E24377A / ETEC)).